Consider the following 328-residue polypeptide: DNA-directed RNA polymerase subunit alpha (328 aa).

Residues Met-1 to Glu-234 form an alpha N-terminal domain (alpha-NTD) region. Residues Ile-268–Lys-328 are alpha C-terminal domain (alpha-CTD).

Belongs to the RNA polymerase alpha chain family. In terms of assembly, in plastids the minimal PEP RNA polymerase catalytic core is composed of four subunits: alpha, beta, beta', and beta''. When a (nuclear-encoded) sigma factor is associated with the core the holoenzyme is formed, which can initiate transcription.

It is found in the plastid. Its subcellular location is the chloroplast. The enzyme catalyses RNA(n) + a ribonucleoside 5'-triphosphate = RNA(n+1) + diphosphate. In terms of biological role, DNA-dependent RNA polymerase catalyzes the transcription of DNA into RNA using the four ribonucleoside triphosphates as substrates. The polypeptide is DNA-directed RNA polymerase subunit alpha (Citrus sinensis (Sweet orange)).